Here is a 121-residue protein sequence, read N- to C-terminus: Small ribosomal subunit protein uS13 (121 aa).

Residues 94–121 (GLPMRGQRTRTNARTRKGPRKAAAALKK) form a disordered region.

Belongs to the universal ribosomal protein uS13 family. In terms of assembly, part of the 30S ribosomal subunit. Forms a loose heterodimer with protein S19. Forms two bridges to the 50S subunit in the 70S ribosome.

Functionally, located at the top of the head of the 30S subunit, it contacts several helices of the 16S rRNA. In the 70S ribosome it contacts the 23S rRNA (bridge B1a) and protein L5 of the 50S subunit (bridge B1b), connecting the 2 subunits; these bridges are implicated in subunit movement. Contacts the tRNAs in the A and P-sites. This Polaromonas sp. (strain JS666 / ATCC BAA-500) protein is Small ribosomal subunit protein uS13.